The chain runs to 554 residues: Estrogen receptor beta (554 aa).

The interval 25–173 (TEIKNSPAGV…NPGSKKDAHF (149 aa)) is modulating. NR C4-type zinc fingers lie at residues 174–194 (CAVC…CEGC) and 210–234 (CPAT…LRKC). The nuclear receptor DNA-binding region spans 174 to 239 (CAVCSDYASG…RLRKCYEVGM (66 aa)). The region spanning 289 to 521 (SPEQFVLTLL…DLLLEMLNAH (233 aa)) is the NR LBD domain. The disordered stretch occupies residues 529 to 554 (PLATHPEFGPLEQMEPGESLRKGEPQ).

Belongs to the nuclear hormone receptor family. NR3 subfamily. As to quaternary structure, binds DNA as a homodimer. Can form a heterodimer with ER-alpha. In terms of tissue distribution, brain, pituitary, skeletal muscle, liver, adrenal, kidney, intestine and ovary.

Its subcellular location is the nucleus. Functionally, binds estrogens with an affinity similar to that of ER-alpha, and activates expression of reporter genes containing estrogen response elements (ERE) in an estrogen-dependent manner. Locally synthesized estrogens may act via ER beta, in addition to ER alpha, to mediate seasonal or developmental effects on nearby song nuclei. In Sturnus vulgaris (Starling), this protein is Estrogen receptor beta (ESR2).